A 394-amino-acid chain; its full sequence is 4-hydroxybenzoate 3-monooxygenase (NAD(P)H) (394 aa).

FAD is bound by residues E32, 42-47, and Q102; that span reads TIRAGV. Residues Y203, 214–216, and Y224 contribute to the substrate site; that span reads STR. D288 contributes to the FAD binding site. P295 contributes to the substrate binding site. 301–302 is a binding site for FAD; sequence LN.

Belongs to the aromatic-ring hydroxylase family. It depends on FAD as a cofactor.

It carries out the reaction 4-hydroxybenzoate + NADH + O2 + H(+) = 3,4-dihydroxybenzoate + NAD(+) + H2O. It catalyses the reaction 4-hydroxybenzoate + NADPH + O2 + H(+) = 3,4-dihydroxybenzoate + NADP(+) + H2O. In terms of biological role, involved in the degradation of 4-hydroxybenzoate (4HB) via the protocatechuate (PCA) 2,3-cleavage pathway. Catalyzes the conversion of 4HB into 2-hydroxypenta-2,4-dienoate (HPD). It is highly specific for 4-hydroxybenzoate, and is able to utilize both NADH and NADPH as electron donors at approximately equal rates. The chain is 4-hydroxybenzoate 3-monooxygenase (NAD(P)H) (praI) from Paenibacillus sp.